The primary structure comprises 289 residues: Ribosomal RNA small subunit methyltransferase I (289 aa).

The protein belongs to the methyltransferase superfamily. RsmI family.

It localises to the cytoplasm. It carries out the reaction cytidine(1402) in 16S rRNA + S-adenosyl-L-methionine = 2'-O-methylcytidine(1402) in 16S rRNA + S-adenosyl-L-homocysteine + H(+). Its function is as follows. Catalyzes the 2'-O-methylation of the ribose of cytidine 1402 (C1402) in 16S rRNA. This is Ribosomal RNA small subunit methyltransferase I from Helicobacter pylori (strain J99 / ATCC 700824) (Campylobacter pylori J99).